A 2179-amino-acid chain; its full sequence is Genome polyprotein (2179 aa).

Positions 1 to 20 (MGAQVSTQKSGSHENQNILT) are disordered. The N-myristoyl glycine; by host moiety is linked to residue G2. At 2-1491 (GAQVSTQKSG…AMNQASMIIN (1490 aa)) the chain is on the cytoplasmic side. Residues 564–584 (ALTEGLGDELEEVIVEKTKQT) are amphipathic alpha-helix. Active-site for protease 2A activity residues include H876 and D894. Residues C911 and C913 each coordinate Zn(2+). C965 functions as the For protease 2A activity in the catalytic mechanism. C971 and H973 together coordinate Zn(2+). The segment at 1101-1173 (NDGWFRKFND…HISNPTQEKR (73 aa)) is membrane-binding. The segment at 1101–1239 (NDGWFRKFND…TPGSGKSLTT (139 aa)) is oligomerization. The tract at residues 1122–1126 (ANKIS) is RNA-binding. One can recognise an SF3 helicase domain in the interval 1205 to 1361 (KNKMVNYMQF…TTYTKNGKLN (157 aa)). Residues C1369, C1372, C1381, and C1386 each coordinate Zn(2+). The C4-type zinc finger occupies 1369-1386 (CKDCHQPSNFKKCCPLVC). The tract at residues 1413–1420 (DFKSKMQI) is RNA-binding. The oligomerization stretch occupies residues 1424 to 1429 (LETLFQ). The stretch at 1492-1507 (TILMFVSTLGIVYVIY) is an intramembrane region. At 1508-2179 (KLFAQTQGPY…VLRRRWLDLF (672 aa)) the chain is on the cytoplasmic side. Y1517 carries the O-(5'-phospho-RNA)-tyrosine modification. In terms of domain architecture, Peptidase C3 spans 1538–1715 (GPNTEFALSL…FSAQLKKQYF (178 aa)). Catalysis depends on for protease 3C activity residues H1577, E1608, and C1683. Residues 1946–2060 (GHLMAFDYSN…SYPYELDPQV (115 aa)) form the RdRp catalytic domain. Mg(2+)-binding residues include D1952 and D2046.

This sequence belongs to the picornaviruses polyprotein family. As to quaternary structure, interacts with capsid protein VP1 and capsid protein VP3 to form heterotrimeric protomers. In terms of assembly, interacts with capsid protein VP0, and capsid protein VP3 to form heterotrimeric protomers. Five protomers subsequently associate to form pentamers which serve as building blocks for the capsid. Interacts with capsid protein VP2, capsid protein VP3 and capsid protein VP4 following cleavage of capsid protein VP0. Interacts with host ICAM1. Interacts with capsid protein VP1 and capsid protein VP3 in the mature capsid. As to quaternary structure, interacts with capsid protein VP0 and capsid protein VP1 to form heterotrimeric protomers. Five protomers subsequently associate to form pentamers which serve as building blocks for the capsid. Interacts with capsid protein VP4 in the mature capsid. Interacts with protein 2C; this interaction may be important for virion morphogenesis. In terms of assembly, interacts with capsid protein VP1 and capsid protein VP3. Homodimer. As to quaternary structure, homohexamer; forms a hexameric ring structure with 6-fold symmetry characteristic of AAA+ ATPases. Interacts (via N-terminus) with host RTN3 (via reticulon domain); this interaction is important for viral replication. Interacts with capsid protein VP3; this interaction may be important for virion morphogenesis. In terms of assembly, interacts with protein 3CD. Homodimer. Interacts with host GBF1. Interacts (via GOLD domain) with host ACBD3 (via GOLD domain); this interaction allows the formation of a viral protein 3A/ACBD3 heterotetramer with a 2:2 stoichiometry, which will stimulate the recruitment of host PI4KB in order to synthesize PI4P at the viral RNA replication sites. As to quaternary structure, interacts with RNA-directed RNA polymerase. In terms of assembly, interacts with protein 3AB and with RNA-directed RNA polymerase. Interacts with Viral protein genome-linked and with protein 3CD. The cofactor is Mg(2+). Post-translationally, specific enzymatic cleavages in vivo by the viral proteases yield processing intermediates and the mature proteins. In terms of processing, myristoylation is required for the formation of pentamers during virus assembly. Further assembly of 12 pentamers and a molecule of genomic RNA generates the provirion. During virion maturation, immature virions are rendered infectious following cleavage of VP0 into VP4 and VP2. This maturation seems to be an autocatalytic event triggered by the presence of RNA in the capsid and it is followed by a conformational change infectious virion. Post-translationally, myristoylation is required during RNA encapsidation and formation of the mature virus particle. In terms of processing, VPg is uridylylated by the polymerase into VPg-pUpU. This acts as a nucleotide-peptide primer for the genomic RNA replication.

It is found in the virion. The protein localises to the host cytoplasm. It localises to the host cytoplasmic vesicle membrane. The protein resides in the host nucleus. It catalyses the reaction a ribonucleoside 5'-triphosphate + H2O = a ribonucleoside 5'-diphosphate + phosphate + H(+). The catalysed reaction is Selective cleavage of Tyr-|-Gly bond in the picornavirus polyprotein.. The enzyme catalyses RNA(n) + a ribonucleoside 5'-triphosphate = RNA(n+1) + diphosphate. It carries out the reaction Selective cleavage of Gln-|-Gly bond in the poliovirus polyprotein. In other picornavirus reactions Glu may be substituted for Gln, and Ser or Thr for Gly.. With respect to regulation, replication or transcription is subject to high level of random mutations by the nucleotide analog ribavirin. Functionally, forms an icosahedral capsid of pseudo T=3 symmetry with capsid proteins VP2 and VP3. The capsid is 300 Angstroms in diameter, composed of 60 copies of each capsid protein and enclosing the viral positive strand RNA genome. Capsid protein VP1 mainly forms the vertices of the capsid. Capsid protein VP1 interacts with host ICAM1 to provide virion attachment to target host cells. This attachment induces virion internalization. Tyrosine kinases are probably involved in the entry process. After binding to its receptor, the capsid undergoes conformational changes. Capsid protein VP1 N-terminus (that contains an amphipathic alpha-helix) and capsid protein VP4 are externalized. Together, they shape a pore in the host membrane through which viral genome is translocated to host cell cytoplasm. After genome has been released, the channel shrinks. Forms an icosahedral capsid of pseudo T=3 symmetry with capsid proteins VP2 and VP3. The capsid is 300 Angstroms in diameter, composed of 60 copies of each capsid protein and enclosing the viral positive strand RNA genome. In terms of biological role, lies on the inner surface of the capsid shell. After binding to the host receptor, the capsid undergoes conformational changes. Capsid protein VP4 is released, Capsid protein VP1 N-terminus is externalized, and together, they shape a pore in the host membrane through which the viral genome is translocated into the host cell cytoplasm. Its function is as follows. Component of immature procapsids, which is cleaved into capsid proteins VP4 and VP2 after maturation. Allows the capsid to remain inactive before the maturation step. Functionally, cysteine protease that cleaves viral polyprotein and specific host proteins. It is responsible for the autocatalytic cleavage between the P1 and P2 regions, which is the first cleavage occurring in the polyprotein. Also cleaves the host translation initiation factor EIF4G1, in order to shut down the capped cellular mRNA translation. Inhibits the host nucleus-cytoplasm protein and RNA trafficking by cleaving host members of the nuclear pores including NUP62 and NUP153. Counteracts stress granule formation probably by antagonizing its assembly or promoting its dissassembly. Plays an essential role in the virus replication cycle by acting as a viroporin. Creates a pore in the host endoplasmic reticulum and as a consequence releases Ca2+ in the cytoplasm of infected cell. In turn, high levels of cytoplasmic calcium may trigger membrane trafficking and transport of viral ER-associated proteins to viroplasms, sites of viral genome replication. In terms of biological role, induces and associates with structural rearrangements of intracellular membranes. Displays RNA-binding, nucleotide binding and NTPase activities. May play a role in virion morphogenesis and viral RNA encapsidation by interacting with the capsid protein VP3. Its function is as follows. Localizes the viral replication complex to the surface of membranous vesicles. Together with protein 3CD binds the Cis-Active RNA Element (CRE) which is involved in RNA synthesis initiation. Acts as a cofactor to stimulate the activity of 3D polymerase, maybe through a nucleid acid chaperone activity. Functionally, localizes the viral replication complex to the surface of membranous vesicles. It inhibits host cell endoplasmic reticulum-to-Golgi apparatus transport and causes the disassembly of the Golgi complex, possibly through GBF1 interaction. This would result in depletion of MHC, trail receptors and IFN receptors at the host cell surface. Plays an essential role in viral RNA replication by recruiting ACBD3 and PI4KB at the viral replication sites, thereby allowing the formation of the rearranged membranous structures where viral replication takes place. Acts as a primer for viral RNA replication and remains covalently bound to viral genomic RNA. VPg is uridylylated prior to priming replication into VPg-pUpU. The oriI viral genomic sequence may act as a template for this. The VPg-pUpU is then used as primer on the genomic RNA poly(A) by the RNA-dependent RNA polymerase to replicate the viral genome. During genome replication, the VPg-RNA linkage is removed by the host TDP2, thereby accelerating replication. During the late stage of the replication cycle, host TDP2 is excluded from sites of viral RNA synthesis and encapsidation, allowing for the generation of progeny virions. In terms of biological role, involved in the viral replication complex and viral polypeptide maturation. It exhibits protease activity with a specificity and catalytic efficiency that is different from protease 3C. Protein 3CD lacks polymerase activity. Protein 3CD binds to the 5'UTR of the viral genome. Its function is as follows. Major viral protease that mediates proteolytic processing of the polyprotein. Cleaves host EIF5B, contributing to host translation shutoff. Cleaves also host PABPC1, contributing to host translation shutoff. Cleaves host NLRP1, triggers host N-glycine-mediated degradation of the autoinhibitory NLRP1 N-terminal fragment. Functionally, replicates the viral genomic RNA on the surface of intracellular membranes. May form linear arrays of subunits that propagate along a strong head-to-tail interaction called interface-I. Covalently attaches UMP to a tyrosine of VPg, which is used to prime RNA synthesis. The positive stranded RNA genome is first replicated at virus induced membranous vesicles, creating a dsRNA genomic replication form. This dsRNA is then used as template to synthesize positive stranded RNA genomes. ss(+)RNA genomes are either translated, replicated or encapsidated. This chain is Genome polyprotein, found in Homo sapiens (Human).